The sequence spans 130 residues: Protein UL145 (130 aa).

Interacts with host DDB1; this interaction promotes STAT2 degradation.

Its function is as follows. Plays a role in the inhibition of host innate immunity by exploiting host DDB1-cullin RING ubiquitin ligases (CRLs). Mechanistically, recruits host DDB1 via a DCAF-like interaction motif to antagonize IFN signaling by STAT2 degradation. The sequence is that of Protein UL145 (UL145) from Homo sapiens (Human).